A 366-amino-acid polypeptide reads, in one-letter code: 5-hydroxytryptamine receptor 1F (366 aa).

The Extracellular portion of the chain corresponds to Met1–Ile24. Residues Asn5 and Asn10 are each glycosylated (N-linked (GlcNAc...) asparagine). Residues Leu25–Ile49 form a helical membrane-spanning segment. The Cytoplasmic portion of the chain corresponds to Val50 to Asn59. The chain crosses the membrane as a helical span at residues Tyr60–Ile81. Topologically, residues Val82–Cys96 are extracellular. A disulfide bridge links Cys96 with Cys172. A helical membrane pass occupies residues Asp97 to Leu119. Serotonin contacts are provided by Asp103 and Cys107. Positions Asp120–Tyr122 match the DRY motif; important for ligand-induced conformation changes motif. Over Asp120–His139 the chain is Cytoplasmic. A helical membrane pass occupies residues Ala140–Leu159. The Extracellular segment spans residues Phe160–His178. Residues Ile179 to Tyr202 traverse the membrane as a helical segment. At Lys203–Ala291 the chain is on the cytoplasmic side. Residues Ala292 to Val315 form a helical membrane-spanning segment. The Extracellular segment spans residues Val316–Glu327. Residues Met328–Phe350 form a helical membrane-spanning segment. The NPxxY motif; important for ligand-induced conformation changes and signaling signature appears at Asn343 to Tyr347. Residues Asn351–Cys366 lie on the Cytoplasmic side of the membrane.

The protein belongs to the G-protein coupled receptor 1 family.

Its subcellular location is the cell membrane. G-protein coupled receptor for 5-hydroxytryptamine (serotonin). Also functions as a receptor for various alkaloids and psychoactive substances. Receptor for lasmiditan, a drug for the treatment of acute migraine. Ligand binding causes a conformation change that triggers signaling via guanine nucleotide-binding proteins (G proteins) and modulates the activity of downstream effectors, such as adenylate cyclase. HTR1F is coupled to G(i)/G(o) G alpha proteins and mediates inhibitory neurotransmission by inhibiting adenylate cyclase activity. In Homo sapiens (Human), this protein is 5-hydroxytryptamine receptor 1F.